A 72-amino-acid polypeptide reads, in one-letter code: uncharacterized protein (72 aa).

Low complexity predominate over residues 1-38 (MSIFSSLSSLSTGSLKSSVSSIENGSSSGSFGSNETSG). Residues 1 to 42 (MSIFSSLSSLSTGSLKSSVSSIENGSSSGSFGSNETSGWGQH) are disordered.

This is an uncharacterized protein from Dictyostelium discoideum (Social amoeba).